The primary structure comprises 1057 residues: Protein transport protein Sec16B (1057 aa).

A compositionally biased stretch (polar residues) spans 1–15 (MELWVPQTQGRTTGP). The tract at residues 1–86 (MELWVPQTQG…VSGADYLKGS (86 aa)) is disordered. Over residues 45-63 (QDTHKNSKPQQDPRDDHQQ) the composition is skewed to basic and acidic residues. 4 positions are modified to phosphoserine: S70, S137, S161, and S185. Positions 185-220 (SAFGLEQPGEFFPESGAQKQKPSLTSKSNLLQQHES) are disordered. Polar residues predominate over residues 201-213 (AQKQKPSLTSKSN). S245 carries the phosphoserine modification. The central conserved domain (CCD); required for localization to endoplasmic reticulum exit sites stretch occupies residues 263-708 (APMRFYVPHV…KHKELEQTRT (446 aa)). A compositionally biased stretch (basic and acidic residues) spans 704–715 (EQTRTGDLRDPD). Disordered stretches follow at residues 704–778 (EQTR…TYSE) and 849–1057 (AVIS…SQPC). Polar residues predominate over residues 737–764 (GQQNYSEDSEYSSALWPTSEQTSLTNPT). At T856 the chain carries Phosphothreonine. Phosphoserine occurs at positions 866, 869, 872, and 881. Over residues 883-903 (GADKPPHPDASQKEKLRDGKN) the composition is skewed to basic and acidic residues. The span at 906 to 926 (SSGFGWFSWFRSKPASSVSTS) shows a compositional bias: low complexity. The span at 927–938 (GDEDSVDSSDSE) shows a compositional bias: acidic residues. Residues 990-999 (EGVGIGGFSG) show a composition bias toward gly residues. Residues 1028-1043 (NPSQVPQLPTASSLNR) show a composition bias toward polar residues.

Belongs to the SEC16 family. In terms of assembly, SEC16A and SEC16B are each present in multiple copies in a heteromeric complex. Interacts with TFG. Interacts with SEC13. As to expression, liver, kidney, heart, spleen and brain.

It localises to the endoplasmic reticulum membrane. The protein resides in the golgi apparatus membrane. Its function is as follows. Plays a role in the organization of the endoplasmic reticulum exit sites (ERES), also known as transitional endoplasmic reticulum (tER). Required for secretory cargo traffic from the endoplasmic reticulum to the Golgi apparatus. Involved in peroxisome biogenesis. Regulates the transport of peroxisomal biogenesis factors PEX3 and PEX16 from the ER to peroxisomes. In Rattus norvegicus (Rat), this protein is Protein transport protein Sec16B (Sec16b).